The primary structure comprises 534 residues: Bifunctional purine biosynthesis protein PurH (534 aa).

The MGS-like domain occupies 1-148; sequence MNTVRPIRRA…KNHQDVTIVV (148 aa).

It belongs to the PurH family.

It catalyses the reaction (6R)-10-formyltetrahydrofolate + 5-amino-1-(5-phospho-beta-D-ribosyl)imidazole-4-carboxamide = 5-formamido-1-(5-phospho-D-ribosyl)imidazole-4-carboxamide + (6S)-5,6,7,8-tetrahydrofolate. The catalysed reaction is IMP + H2O = 5-formamido-1-(5-phospho-D-ribosyl)imidazole-4-carboxamide. Its pathway is purine metabolism; IMP biosynthesis via de novo pathway; 5-formamido-1-(5-phospho-D-ribosyl)imidazole-4-carboxamide from 5-amino-1-(5-phospho-D-ribosyl)imidazole-4-carboxamide (10-formyl THF route): step 1/1. It functions in the pathway purine metabolism; IMP biosynthesis via de novo pathway; IMP from 5-formamido-1-(5-phospho-D-ribosyl)imidazole-4-carboxamide: step 1/1. The protein is Bifunctional purine biosynthesis protein PurH of Shewanella denitrificans (strain OS217 / ATCC BAA-1090 / DSM 15013).